The following is a 347-amino-acid chain: Putative histone PARylation factor 1-like (347 aa).

N-acetylmethionine is present on methionine 1. N6-acetyllysine occurs at positions 187 and 234.

This sequence belongs to the HPF1 family.

The sequence is that of Putative histone PARylation factor 1-like from Homo sapiens (Human).